A 761-amino-acid chain; its full sequence is 5-methyltetrahydropteroyltriglutamate--homocysteine methyltransferase (761 aa).

Residues 16–19 and Lys-116 each bind 5-methyltetrahydropteroyltri-L-glutamate; that span reads RELK. L-homocysteine-binding positions include 437–439 and Glu-490; that span reads IGS. L-methionine is bound by residues 437-439 and Glu-490; that span reads IGS. 5-methyltetrahydropteroyltri-L-glutamate is bound by residues 521 to 522 and Trp-567; that span reads RC. Asp-605 is an L-homocysteine binding site. L-methionine is bound at residue Asp-605. Glu-611 is a 5-methyltetrahydropteroyltri-L-glutamate binding site. Residues His-647, Cys-649, and Glu-671 each coordinate Zn(2+). The Proton donor role is filled by His-700. Position 732 (Cys-732) interacts with Zn(2+).

It belongs to the vitamin-B12 independent methionine synthase family. Zn(2+) is required as a cofactor.

It carries out the reaction 5-methyltetrahydropteroyltri-L-glutamate + L-homocysteine = tetrahydropteroyltri-L-glutamate + L-methionine. It functions in the pathway amino-acid biosynthesis; L-methionine biosynthesis via de novo pathway; L-methionine from L-homocysteine (MetE route): step 1/1. Catalyzes the transfer of a methyl group from 5-methyltetrahydrofolate to homocysteine resulting in methionine formation. The chain is 5-methyltetrahydropteroyltriglutamate--homocysteine methyltransferase from Chromohalobacter salexigens (strain ATCC BAA-138 / DSM 3043 / CIP 106854 / NCIMB 13768 / 1H11).